We begin with the raw amino-acid sequence, 72 residues long: DNA gyrase inhibitor YacG (72 aa).

Zn(2+) is bound by residues Cys-7, Cys-10, Cys-26, and Cys-30. Residues 44–72 (SIAGEEHTPSSDTARPQLSAEDLALLEQD) are disordered.

Belongs to the DNA gyrase inhibitor YacG family. In terms of assembly, interacts with GyrB. Zn(2+) is required as a cofactor.

Inhibits all the catalytic activities of DNA gyrase by preventing its interaction with DNA. Acts by binding directly to the C-terminal domain of GyrB, which probably disrupts DNA binding by the gyrase. This is DNA gyrase inhibitor YacG from Tolumonas auensis (strain DSM 9187 / NBRC 110442 / TA 4).